The sequence spans 554 residues: Valerianol synthase TPS1A (554 aa).

Mg(2+) is bound by residues aspartate 307 and aspartate 311. A DDXXD motif motif is present at residues 326–330 (VQRWD). Mg(2+) contacts are provided by aspartate 452, serine 456, and glutamate 460.

This sequence belongs to the terpene synthase family. Mg(2+) is required as a cofactor. Expressed in flowers.

It catalyses the reaction (2E,6E)-farnesyl diphosphate + H2O = valerianol + diphosphate. Its pathway is secondary metabolite biosynthesis; terpenoid biosynthesis. Terpene synthase that catalyzes the biosynthesis of the terpene valerianol, which is a volatile compound of floral scent. This Camellia hiemalis (Camellia) protein is Valerianol synthase TPS1A.